The following is a 356-amino-acid chain: Protein RecA (356 aa).

ATP is bound at residue 78 to 85 (GPESSGKT).

This sequence belongs to the RecA family.

It localises to the cytoplasm. Its function is as follows. Can catalyze the hydrolysis of ATP in the presence of single-stranded DNA, the ATP-dependent uptake of single-stranded DNA by duplex DNA, and the ATP-dependent hybridization of homologous single-stranded DNAs. It interacts with LexA causing its activation and leading to its autocatalytic cleavage. The protein is Protein RecA of Paracoccus denitrificans.